A 116-amino-acid chain; its full sequence is MKLSTFIIMISLAVALATWPSEHIEGSDSETKLNVELGPYALADRAEKGKDDSLNKGEPCQFHCECRGASVLCEAVYGTRSPMYKCMIKRLPISVLDIMYQAERALEKLASSFRCE.

Residues 1–17 form the signal peptide; it reads MKLSTFIIMISLAVALA. The propeptide occupies 18 to 50; the sequence is TWPSEHIEGSDSETKLNVELGPYALADRAEKGK.

The protein belongs to the neurotoxin 25 family. F7 subfamily. Post-translationally, contains 3 disulfide bonds. As to expression, expressed by the venom gland.

It is found in the secreted. This Lasiodora sp. (strain IBSP 8539) (Brazilian salmon pink birdeater) protein is U3-theraphotoxin-Lsp1a.